The chain runs to 607 residues: UvrABC system protein C (607 aa).

The 79-residue stretch at 16 to 94 folds into the GIY-YIG domain; that stretch reads ARPGVYRMFD…IKQWRPPYNI (79 aa). In terms of domain architecture, UVR spans 203–238; that stretch reads QQLGNELNAEMEKAAMALNFEKAAELRDQIALLRRV.

Belongs to the UvrC family. As to quaternary structure, interacts with UvrB in an incision complex.

The protein localises to the cytoplasm. Its function is as follows. The UvrABC repair system catalyzes the recognition and processing of DNA lesions. UvrC both incises the 5' and 3' sides of the lesion. The N-terminal half is responsible for the 3' incision and the C-terminal half is responsible for the 5' incision. The chain is UvrABC system protein C from Pseudomonas putida (strain W619).